Consider the following 267-residue polypeptide: Very long chain fatty acid elongase 6 (267 aa).

A glycan (N-linked (GlcNAc...) asparagine) is linked at Asn2. The next 7 membrane-spanning stretches (helical) occupy residues 34 to 51 (FLFS…RHLM), 70 to 90 (LAVF…YILM), 111 to 131 (FWAY…IFII), 136 to 156 (KLIF…WYSY), 159 to 179 (MVAG…VMYS), 197 to 217 (FITL…YLVF), and 234 to 254 (IFWS…FFFE).

This sequence belongs to the ELO family. ELOVL6 subfamily. In terms of processing, N-Glycosylated. In terms of tissue distribution, highly expressed in adrenal gland, liver, white adipose tissue (WAT), adult and fetal brain, cerebellum, spinal cord, testis, skin and peripheral nerve; where lipogenesis and steroidogenesis are active. Weakly expressed in kidney, heart, skeletal muscle, lung, and spleen.

The protein resides in the endoplasmic reticulum membrane. The catalysed reaction is a very-long-chain acyl-CoA + malonyl-CoA + H(+) = a very-long-chain 3-oxoacyl-CoA + CO2 + CoA. It catalyses the reaction hexadecanoyl-CoA + malonyl-CoA + H(+) = 3-oxooctadecanoyl-CoA + CO2 + CoA. The enzyme catalyses (9Z)-hexadecenoyl-CoA + malonyl-CoA + H(+) = 3-oxo-(11Z)-octadecenoyl-CoA + CO2 + CoA. It carries out the reaction dodecanoyl-CoA + malonyl-CoA + H(+) = 3-oxotetradecanoyl-CoA + CO2 + CoA. The catalysed reaction is tetradecanoyl-CoA + malonyl-CoA + H(+) = 3-oxohexadecanoyl-CoA + CO2 + CoA. It catalyses the reaction (9Z)-octadecenoyl-CoA + malonyl-CoA + H(+) = 3-oxo-(11Z)-eicosenoyl-CoA + CO2 + CoA. The enzyme catalyses (9Z,12Z)-octadecadienoyl-CoA + malonyl-CoA + H(+) = (11Z,14Z)-3-oxoicosa-11,14-dienoyl-CoA + CO2 + CoA. It carries out the reaction (9Z,12Z,15Z)-octadecatrienoyl-CoA + malonyl-CoA + H(+) = (11Z,14Z,17Z)-3-oxoeicosatrienoyl-CoA + CO2 + CoA. The protein operates within lipid metabolism; fatty acid biosynthesis. The reaction is stimulated by the presence of HSD17B12, the enzyme catalyzing the second step of the elongation cycle. Functionally, catalyzes the first and rate-limiting reaction of the four reactions that constitute the long-chain fatty acids elongation cycle. This endoplasmic reticulum-bound enzymatic process allows the addition of 2 carbons to the chain of long- and very long-chain fatty acids (VLCFAs) per cycle. Condensing enzyme that elongates fatty acids with 12, 14 and 16 carbons with higher activity toward C16:0 acyl-CoAs. Catalyzes the synthesis of unsaturated C16 long chain fatty acids and, to a lesser extent, C18:0 and those with low desaturation degree. May participate in the production of saturated and monounsaturated VLCFAs of different chain lengths that are involved in multiple biological processes as precursors of membrane lipids and lipid mediators. In Mus musculus (Mouse), this protein is Very long chain fatty acid elongase 6.